Here is a 312-residue protein sequence, read N- to C-terminus: Methionyl-tRNA formyltransferase (312 aa).

A (6S)-5,6,7,8-tetrahydrofolate-binding site is contributed by 109-112 (SLLP).

The protein belongs to the Fmt family.

It catalyses the reaction L-methionyl-tRNA(fMet) + (6R)-10-formyltetrahydrofolate = N-formyl-L-methionyl-tRNA(fMet) + (6S)-5,6,7,8-tetrahydrofolate + H(+). In terms of biological role, attaches a formyl group to the free amino group of methionyl-tRNA(fMet). The formyl group appears to play a dual role in the initiator identity of N-formylmethionyl-tRNA by promoting its recognition by IF2 and preventing the misappropriation of this tRNA by the elongation apparatus. The sequence is that of Methionyl-tRNA formyltransferase from Listeria innocua serovar 6a (strain ATCC BAA-680 / CLIP 11262).